We begin with the raw amino-acid sequence, 735 residues long: MIDGEAYFEKNSTGKLGSWGWRDVNLQFIICTLPVPIYFVVVAIWTINGASNSYRFPFLQTYMILTDRFWLFFRCFTIVAWCGWCSNYIFFPCLMNAILYIISLSLSRDTTFILFIFYQMNKLITVIRDFSYSVYNWCYETVIGENTRKYKMTWKVPKESLKIIVNKNADARMQRELENRTAKDEANALTSRRRVFGSYALIGTQRAEFIQFRQIKHIDITNASLDFLYNLKQLKHDNLANFYGIQLNDDLNTMTILHALVERGTLEEFCLDRDFGMDETFKSAFMRDILKGLQYLHLSPVAYHGHLHAATCLIDINWVLKIALYGVTNFVCDNFDAENITMPDRSDYTISYAQYVCFPPEHIREYDATGKLPTRFVRGSKQGDIYCVGMIFYMMIEREDPYRLIHSVERPGSGLMMEILDHNLMPFISNNETQEDTLLDKCKECWNRDPEKRPTIENLRNAIAICYADSKGNLIDQMIRMNEKYADELETLVAARSADLALAQMQTMRLLNEMLPASIAKDLKNGVIAPARSYASATVMFVQICDFIVILKRRPPKEVIGFLNDIFDQFDTVIKRHDAYKVETTGETYMVASGVPNENEGRHVFEVAEMSLEIRAISLSYTLENDKNYKLRVRIGFHAGPIAAGVIGIKNPRYCLFGDTVNFASRMQSNCPPLQIQTSEITARMLLATHEYKLVKRGIVHVKGKGEVNCYWLNEHIHKDEEIEESGTISHPLES.

An N-linked (GlcNAc...) asparagine glycan is attached at asparagine 11. Residues 28–48 (FIICTLPVPIYFVVVAIWTIN) form a helical membrane-spanning segment. The 278-residue stretch at 188–465 (ALTSRRRVFG…IENLRNAIAI (278 aa)) folds into the Protein kinase domain. The 131-residue stretch at 538-668 (TVMFVQICDF…DTVNFASRMQ (131 aa)) folds into the Guanylate cyclase domain.

It belongs to the adenylyl cyclase class-4/guanylyl cyclase family. As to expression, expressed bilaterally in ASK, ASI and ASJ sensory neurons.

It is found in the cell membrane. The enzyme catalyses GTP = 3',5'-cyclic GMP + diphosphate. Functionally, guanylate cyclase involved in the production of the second messenger cGMP. May be involved in sensitivity to quinine by regulating egl-4 activity through the production of cGMP. Promotes the calcium flux to the cytoplasm in ASJ sensory neurons upon removal of a nitric oxide (NO) stimulus and is thereby involved in the behavioral avoidance response to NO-producing organisms like P.aeruginosa. In Caenorhabditis elegans, this protein is Receptor-type guanylate cyclase gcy-27.